Reading from the N-terminus, the 252-residue chain is Hydroxyacylglutathione hydrolase (252 aa).

Zn(2+)-binding residues include His54, His56, Asp58, His59, His111, Asp128, and His166.

It belongs to the metallo-beta-lactamase superfamily. Glyoxalase II family. In terms of assembly, monomer. Zn(2+) is required as a cofactor.

It carries out the reaction an S-(2-hydroxyacyl)glutathione + H2O = a 2-hydroxy carboxylate + glutathione + H(+). It functions in the pathway secondary metabolite metabolism; methylglyoxal degradation; (R)-lactate from methylglyoxal: step 2/2. Its function is as follows. Thiolesterase that catalyzes the hydrolysis of S-D-lactoyl-glutathione to form glutathione and D-lactic acid. The chain is Hydroxyacylglutathione hydrolase from Vibrio campbellii (strain ATCC BAA-1116).